The following is a 425-amino-acid chain: Enolase (425 aa).

Gln163 is a binding site for (2R)-2-phosphoglycerate. Glu205 (proton donor) is an active-site residue. 3 residues coordinate Mg(2+): Asp242, Glu286, and Asp313. 4 residues coordinate (2R)-2-phosphoglycerate: Lys338, Arg367, Ser368, and Lys389. Lys338 acts as the Proton acceptor in catalysis.

Belongs to the enolase family. Requires Mg(2+) as cofactor.

It localises to the cytoplasm. It is found in the secreted. Its subcellular location is the cell surface. The enzyme catalyses (2R)-2-phosphoglycerate = phosphoenolpyruvate + H2O. The protein operates within carbohydrate degradation; glycolysis; pyruvate from D-glyceraldehyde 3-phosphate: step 4/5. In terms of biological role, catalyzes the reversible conversion of 2-phosphoglycerate (2-PG) into phosphoenolpyruvate (PEP). It is essential for the degradation of carbohydrates via glycolysis. The polypeptide is Enolase (Lactobacillus delbrueckii subsp. bulgaricus (strain ATCC 11842 / DSM 20081 / BCRC 10696 / JCM 1002 / NBRC 13953 / NCIMB 11778 / NCTC 12712 / WDCM 00102 / Lb 14)).